An 80-amino-acid polypeptide reads, in one-letter code: MGKKKRKQEHEKERGILLEGEVVEALPNGMFRVKLETGQEVLAHIAGKLRVNFIRILPGDKVKVELSPYDLTRGRIVYRL.

An S1-like domain is found at 6 to 80 (RKQEHEKERG…LTRGRIVYRL (75 aa)).

Belongs to the IF-1 family. As to quaternary structure, component of the 30S ribosomal translation pre-initiation complex which assembles on the 30S ribosome in the order IF-2 and IF-3, IF-1 and N-formylmethionyl-tRNA(fMet); mRNA recruitment can occur at any time during PIC assembly.

It is found in the cytoplasm. Functionally, one of the essential components for the initiation of protein synthesis. Stabilizes the binding of IF-2 and IF-3 on the 30S subunit to which N-formylmethionyl-tRNA(fMet) subsequently binds. Helps modulate mRNA selection, yielding the 30S pre-initiation complex (PIC). Upon addition of the 50S ribosomal subunit IF-1, IF-2 and IF-3 are released leaving the mature 70S translation initiation complex. In Aquifex aeolicus (strain VF5), this protein is Translation initiation factor IF-1.